Consider the following 932-residue polypeptide: Protocadherin gamma-A6 (932 aa).

The N-terminal stretch at 1-29 (MAPPQRHPQRSEQVLLLTLLGTLWGAAAA) is a signal peptide. 6 Cadherin domains span residues 30 to 133 (QIRY…TPRF), 134 to 242 (LKEE…TPVF), 243 to 347 (TQPV…VPEV), 348 to 452 (VVTS…PPTF), 453 to 562 (PHSS…APEI), and 570 to 682 (DGST…EPSA). At 30–692 (QIRYSIPEEL…KPNDSDLTLY (663 aa)) the chain is on the extracellular side. N-linked (GlcNAc...) asparagine glycosylation is present at Asn-81. N-linked (GlcNAc...) asparagine glycans are attached at residues Asn-419 and Asn-545. Asn-685 is a glycosylation site (N-linked (GlcNAc...) asparagine). Residues 693-713 (LVVAVAAVSCVFLAFVIVLLA) form a helical membrane-spanning segment. At 714-932 (LRLQRWHKSR…KKKSGKKEKK (219 aa)) the chain is on the cytoplasmic side. 2 disordered regions span residues 803 to 841 (DPRQ…WPNN) and 902 to 932 (ATLT…KEKK). Residues 806-841 (QLQQAPPNTDWRFSQAQRPGTSGSQNGDDTGTWPNN) show a composition bias toward polar residues. A compositionally biased stretch (basic residues) spans 922–932 (NKKKSGKKEKK).

Its subcellular location is the cell membrane. In terms of biological role, potential calcium-dependent cell-adhesion protein. May be involved in the establishment and maintenance of specific neuronal connections in the brain. The polypeptide is Protocadherin gamma-A6 (PCDHGA6) (Pan troglodytes (Chimpanzee)).